The chain runs to 453 residues: UDP-glycosyltransferase 76E1 (453 aa).

Residues serine 272, alanine 331 to glutamine 333, histidine 348 to glutamate 356, and threonine 370 to glutamine 373 each bind UDP-alpha-D-glucose.

This sequence belongs to the UDP-glycosyltransferase family.

Functionally, possesses low quercetin 3-O-glucosyltransferase and 7-O-glucosyltransferase activities in vitro. This Arabidopsis thaliana (Mouse-ear cress) protein is UDP-glycosyltransferase 76E1 (UGT76E1).